The sequence spans 99 residues: Small ribosomal subunit protein eS24 (99 aa).

This sequence belongs to the eukaryotic ribosomal protein eS24 family.

This chain is Small ribosomal subunit protein eS24 (rps2e), found in Thermoplasma volcanium (strain ATCC 51530 / DSM 4299 / JCM 9571 / NBRC 15438 / GSS1).